The following is a 101-amino-acid chain: NADH-quinone oxidoreductase subunit K (101 aa).

3 consecutive transmembrane segments (helical) span residues leucine 5–leucine 25, isoleucine 30–phenylalanine 50, and valine 61–isoleucine 81.

It belongs to the complex I subunit 4L family. NDH-1 is composed of 14 different subunits. Subunits NuoA, H, J, K, L, M, N constitute the membrane sector of the complex.

Its subcellular location is the cell inner membrane. It catalyses the reaction a quinone + NADH + 5 H(+)(in) = a quinol + NAD(+) + 4 H(+)(out). Functionally, NDH-1 shuttles electrons from NADH, via FMN and iron-sulfur (Fe-S) centers, to quinones in the respiratory chain. The immediate electron acceptor for the enzyme in this species is believed to be ubiquinone. Couples the redox reaction to proton translocation (for every two electrons transferred, four hydrogen ions are translocated across the cytoplasmic membrane), and thus conserves the redox energy in a proton gradient. The sequence is that of NADH-quinone oxidoreductase subunit K from Methylacidiphilum infernorum (isolate V4) (Methylokorus infernorum (strain V4)).